A 551-amino-acid polypeptide reads, in one-letter code: Crossover junction endonuclease EME1B (551 aa).

2 disordered regions span residues Met-1–Val-55 and Thr-187–Lys-239. The span at Ser-37–Thr-51 shows a compositional bias: polar residues. Over residues Ser-202–Lys-239 the composition is skewed to basic and acidic residues. The stretch at Lys-203 to Ser-253 forms a coiled coil. The 198-residue stretch at Asn-287–Tyr-484 folds into the ERCC4 domain.

This sequence belongs to the EME1/MMS4 family. Forms a heterodimer with MUS81. Requires Mg(2+) as cofactor. The cofactor is Ca(2+).

The protein localises to the nucleus. In terms of biological role, interacts with MUS81 to form a DNA structure-specific endonuclease with substrate preference for branched DNA structures with a 5'-end at the branch nick. Typical substrates include 3'-flap structures, D-loops, replication forks, nicked Holliday junctions and also intact Holliday junctions with a reduced efficiency. May be required in mitosis for the processing of stalled or collapsed replication fork intermediates. Plays a role in DNA repair and in genotoxic stress-induced homologous recombination (HR) in somatic cells. Mediates a subset of meiotic recombination events that are insensitive to crossover interference. The polypeptide is Crossover junction endonuclease EME1B (EME1B) (Arabidopsis thaliana (Mouse-ear cress)).